Here is a 653-residue protein sequence, read N- to C-terminus: Chaperone protein DnaK (653 aa).

A Phosphothreonine; by autocatalysis modification is found at T200. The interval 612-653 (QGAAGAAGAAGGAGAAAGAEAAGASQQADDVVDAEFKEVKKD) is disordered. Residues 627–639 (AAGAEAAGASQQA) show a composition bias toward low complexity.

It belongs to the heat shock protein 70 family.

In terms of biological role, acts as a chaperone. The polypeptide is Chaperone protein DnaK (Paraburkholderia phymatum (strain DSM 17167 / CIP 108236 / LMG 21445 / STM815) (Burkholderia phymatum)).